The chain runs to 276 residues: MTRPLSYFHLHLISDATGETLLAAGRAAAAQYANARAIEHIYPLIRTEKQLRKVLEGIDAEPGIVLYTIVDQKLAAIIDDSCAEMGVPSVSVLEPVLNTFQSYLGAPAHRRASAQHVLNADYFRRIDALNFTMEHDDGQLPYDIEEADVILVGISRTSKTPTSIYLANRGIKATNVPIVLGIPLPEVLFTAKRPLIVGLVATAERISQIRQNRPLGNVPSLDTGLYTDRVSISEELAYARNICNRNGWPIIDVSRRSIEETAAAILALLRAHNEKG.

Glycine 153–threonine 160 contacts ADP.

It belongs to the pyruvate, phosphate/water dikinase regulatory protein family. PDRP subfamily.

The enzyme catalyses N(tele)-phospho-L-histidyl/L-threonyl-[pyruvate, phosphate dikinase] + ADP = N(tele)-phospho-L-histidyl/O-phospho-L-threonyl-[pyruvate, phosphate dikinase] + AMP + H(+). The catalysed reaction is N(tele)-phospho-L-histidyl/O-phospho-L-threonyl-[pyruvate, phosphate dikinase] + phosphate + H(+) = N(tele)-phospho-L-histidyl/L-threonyl-[pyruvate, phosphate dikinase] + diphosphate. Bifunctional serine/threonine kinase and phosphorylase involved in the regulation of the pyruvate, phosphate dikinase (PPDK) by catalyzing its phosphorylation/dephosphorylation. This chain is Putative pyruvate, phosphate dikinase regulatory protein, found in Brucella anthropi (strain ATCC 49188 / DSM 6882 / CCUG 24695 / JCM 21032 / LMG 3331 / NBRC 15819 / NCTC 12168 / Alc 37) (Ochrobactrum anthropi).